Consider the following 899-residue polypeptide: Ewing's tumor-associated antigen 1 homolog (899 aa).

The tract at residues 1–82 (MSRRRKHGDS…TEERYETPKR (82 aa)) is disordered. A compositionally biased stretch (basic and acidic residues) spans 71-81 (SNTEERYETPK). An ATR-activation domain (AAD) motif is present at residues 105-111 (IFWDQNS). Residues 180 to 210 (TKLKSQNQEEELMKLAKQFDKNMEELDVIQE) adopt a coiled-coil conformation. Glycyl lysine isopeptide (Lys-Gly) (interchain with G-Cter in SUMO2) cross-links involve residues K416 and K444. At S467 the chain carries Phosphoserine. Glycyl lysine isopeptide (Lys-Gly) (interchain with G-Cter in SUMO2) cross-links involve residues K485 and K539. The RBM1 motif signature appears at 607 to 622 (DDVDDDILYQACDDIE). S810 carries the post-translational modification Phosphoserine. Positions 833–899 (NKTVNPLPGK…AQASSVKKGR (67 aa)) are disordered. Residues 859–877 (PSKEEEEKNRKCSPEEIQR) show a composition bias toward basic and acidic residues. The RBM2 motif motif lies at 868-890 (RKCSPEEIQRKRQAALIRRMAKA).

As to quaternary structure, interacts (via RBM1 motif) with RPA1. Interacts (via RBM2 motif) with RPA2. Interacts (via the ATR-activation domain motif) with ATR. In terms of processing, phosphorylated by ATR.

The protein resides in the nucleus. Functionally, replication stress response protein that accumulates at DNA damage sites and promotes replication fork progression and integrity. Recruited to stalled replication forks via interaction with the RPA complex and directly stimulates ATR kinase activity independently of TOPBP1. Probably only regulates a subset of ATR targets. The polypeptide is Ewing's tumor-associated antigen 1 homolog (Bos taurus (Bovine)).